The following is a 254-amino-acid chain: 3-deoxy-manno-octulosonate cytidylyltransferase (254 aa).

The protein belongs to the KdsB family.

Its subcellular location is the cytoplasm. The catalysed reaction is 3-deoxy-alpha-D-manno-oct-2-ulosonate + CTP = CMP-3-deoxy-beta-D-manno-octulosonate + diphosphate. It participates in nucleotide-sugar biosynthesis; CMP-3-deoxy-D-manno-octulosonate biosynthesis; CMP-3-deoxy-D-manno-octulosonate from 3-deoxy-D-manno-octulosonate and CTP: step 1/1. The protein operates within bacterial outer membrane biogenesis; lipopolysaccharide biosynthesis. Activates KDO (a required 8-carbon sugar) for incorporation into bacterial lipopolysaccharide in Gram-negative bacteria. The polypeptide is 3-deoxy-manno-octulosonate cytidylyltransferase (Haemophilus influenzae (strain ATCC 51907 / DSM 11121 / KW20 / Rd)).